The chain runs to 375 residues: uncharacterized protein (375 aa).

The interval 54-78 (EGIPPPTQSQEPLKPQENISRPIHH) is disordered.

This is an uncharacterized protein from Bos taurus (Bovine).